The primary structure comprises 911 residues: MTEGKSIINANLTPLPDKVGVDGLEDKWRAVWDEDGTYKFRNTRDRKAVYSIDTPPPTVSGSLHVGHVFSYTHTDVIARYKRMRGYDVFYPMGWDDNGLPTERRVQNYYGVRVDVSLPYDPDFKPPFEGTDGKKIDAKDQVPISRKNFIELCERLTAQDEKLFEALWRKLGLSIDWSQTYHTIGQHPQRVAQKAFLRNLARGEAYQQDAPGLWDVTFQTAVAQAELESREYPGFYHKVAFRFEDGTPIYIETTRPELLAACTSLIANPNDERYKQYFGQYVYSPLFKVKVPILAHPAAEMDKGAGIAMCCTFGDVTDVEWWRDLKLPTRPIIQRNGRIVMDTPDWIEDPAGREVFAETAGKTTFSARKIIVDKLRESGDLDGEPTPTKRMTNFYEKGDKPLEIVTSRQWYLKNGGTDAKLNAELIERGKELEFHPDFMRVRYENWVHGLNGDWLISRQRFFGVPFPLWYPVNASGEPDYDHPITPSEDRLPIDPTIDVPEGYDESQRDVPGGFTAEKDIMDTWATSSLTPQIVTHWAEPDEASKALFASTFPMDLRPQGQDIIRTWLFSTVDRAHLENKCLPWAHATLSGWILDPDHKKMSKSKGNVVVPNEPIEKFGADAVRYWAAAARLGLDATYDIGQMKIGRRLAIKLLNATKFALAIGREDENHHVGAAAEAAWNPADVTEPLDRAAMAKLALVVRQATEALESYEHSKALEVIESYFWQFCDDYIELVKNRAYGTPDEHGNVPSEKAVKSARTALGLGLDAFARLLAPYLPYATEEVWSWMHAGSGSVHRTAWPVVDPYVEAATGASPELLTWAGKAVEQLRKIKSEAKVSMKTPILSVALSAASEGVEAIHAALGDIAQAGRVVGKFDLVAKHAEESAAEDAPETEVAVEASELGEPPAKKPKH.

Residues 57–67 (PTVSGSLHVGH) carry the 'HIGH' region motif. The 'KMSKS' region motif lies at 599–603 (KMSKS). Lys-602 serves as a coordination point for ATP. The interval 882–911 (EESAAEDAPETEVAVEASELGEPPAKKPKH) is disordered.

The protein belongs to the class-I aminoacyl-tRNA synthetase family. ValS type 2 subfamily. Monomer.

It is found in the cytoplasm. It catalyses the reaction tRNA(Val) + L-valine + ATP = L-valyl-tRNA(Val) + AMP + diphosphate. Functionally, catalyzes the attachment of valine to tRNA(Val). As ValRS can inadvertently accommodate and process structurally similar amino acids such as threonine, to avoid such errors, it has a 'posttransfer' editing activity that hydrolyzes mischarged Thr-tRNA(Val) in a tRNA-dependent manner. The chain is Valine--tRNA ligase from Bifidobacterium longum (strain DJO10A).